Here is a 345-residue protein sequence, read N- to C-terminus: Ribosomal RNA small subunit methyltransferase H (345 aa).

S-adenosyl-L-methionine contacts are provided by residues 47 to 49 (GGY), aspartate 65, phenylalanine 92, aspartate 113, and glutamine 120. Residues 296–345 (EPGPDEVAGNPRARSAKLRAAERTNAPAHPGGDLMGLLPAPPPQRHGRRR) are disordered.

This sequence belongs to the methyltransferase superfamily. RsmH family.

The protein resides in the cytoplasm. The catalysed reaction is cytidine(1402) in 16S rRNA + S-adenosyl-L-methionine = N(4)-methylcytidine(1402) in 16S rRNA + S-adenosyl-L-homocysteine + H(+). Specifically methylates the N4 position of cytidine in position 1402 (C1402) of 16S rRNA. The protein is Ribosomal RNA small subunit methyltransferase H of Xanthobacter autotrophicus (strain ATCC BAA-1158 / Py2).